Consider the following 389-residue polypeptide: Probable DNA double-strand break repair nuclease NurA (389 aa).

Mn(2+) is bound by residues D74 and D151.

It belongs to the NurA family. The cofactor is Mn(2+).

Functionally, involved in DNA double-strand break (DSB) repair. Probably acts with HerA to stimulate resection of the 5' strand and produce the long 3' single-strand that is required for RadA loading. In Methanocaldococcus jannaschii (strain ATCC 43067 / DSM 2661 / JAL-1 / JCM 10045 / NBRC 100440) (Methanococcus jannaschii), this protein is Probable DNA double-strand break repair nuclease NurA.